The following is a 621-amino-acid chain: Cyclic nucleotide-gated ion channel 11 (621 aa).

Topologically, residues methionine 1–threonine 43 are cytoplasmic. A helical transmembrane segment spans residues valine 44–isoleucine 64. Topologically, residues aspartate 65–threonine 76 are extracellular. A helical transmembrane segment spans residues leucine 77 to isoleucine 97. The Cytoplasmic segment spans residues tyrosine 98–arginine 128. The helical transmembrane segment at leucine 129–leucine 149 threads the bilayer. The Extracellular segment spans residues threonine 150–arginine 162. Residues isoleucine 163 to tyrosine 183 traverse the membrane as a helical segment. Topologically, residues lysine 184–arginine 198 are cytoplasmic. A helical membrane pass occupies residues valine 199–tryptophan 219. Residues tyrosine 220–glycine 329 lie on the Extracellular side of the membrane. Residues glutamate 330–glycine 350 form a helical membrane-spanning segment. Residues asparagine 351–alanine 621 are Cytoplasmic-facing. A nucleoside 3',5'-cyclic phosphate-binding positions include leucine 435–glutamine 556 and aspartate 506. The tract at residues tyrosine 549 to tyrosine 564 is calmodulin-binding. Positions glutamine 569 to lysine 598 constitute an IQ domain.

The protein belongs to the cyclic nucleotide-gated cation channel (TC 1.A.1.5) family. As to quaternary structure, homotetramer or heterotetramer.

It localises to the cell membrane. Putative cyclic nucleotide-gated ion channel. The protein is Cyclic nucleotide-gated ion channel 11 (CNGC11) of Arabidopsis thaliana (Mouse-ear cress).